The sequence spans 876 residues: AP-1 complex subunit gamma-1 (876 aa).

9 HEAT repeats span residues 97–135 (DERQ…ICSA), 136–173 (EMAR…KVPD), 248–284 (FLHI…KTES), 308–345 (SLRV…FDDQ), 346–382 (AVQR…ENNV), 384–417 (QLTK…KFSP), 418–454 (EKLW…NASE), 506–545 (VTES…RFPS), and 560–599 (SLLL…ATFN). The GAE domain occupies 756 to 873 (PAYAPIVAYE…LEEGQVSNFP (118 aa)).

Belongs to the adaptor complexes large subunit family. As to quaternary structure, adaptor protein complex 1 (AP-1) is a heterotetramer composed of two large adaptins (gamma-type subunit and beta-type subunit), a medium adaptin (mu-type subunit) and a small adaptin (sigma-type subunit). Binds to EPSIN1. Interacts with DRP2A/ADL6 (via C-terminus).

Its subcellular location is the golgi apparatus. The protein resides in the cytoplasmic vesicle. The protein localises to the clathrin-coated vesicle membrane. Its function is as follows. Subunit of clathrin-associated adaptor protein complex 1 that plays a role in protein sorting at the trans-Golgi network and early endosomes (TGN/EE). The AP complexes mediate both the recruitment of clathrin to membranes and the recognition of sorting signals within the cytosolic tails of transmembrane cargo molecules. The protein is AP-1 complex subunit gamma-1 (GAMMA-ADR) of Arabidopsis thaliana (Mouse-ear cress).